The following is a 307-amino-acid chain: Homoserine O-acetyltransferase (307 aa).

Catalysis depends on C142, which acts as the Acyl-thioester intermediate. Residues K163 and S192 each contribute to the substrate site. Catalysis depends on H235, which acts as the Proton acceptor. E237 is an active-site residue. R249 is a binding site for substrate.

This sequence belongs to the MetA family.

It is found in the cytoplasm. The catalysed reaction is L-homoserine + acetyl-CoA = O-acetyl-L-homoserine + CoA. Its pathway is amino-acid biosynthesis; L-methionine biosynthesis via de novo pathway; O-acetyl-L-homoserine from L-homoserine: step 1/1. Transfers an acetyl group from acetyl-CoA to L-homoserine, forming acetyl-L-homoserine. This chain is Homoserine O-acetyltransferase, found in Rhizobium johnstonii (strain DSM 114642 / LMG 32736 / 3841) (Rhizobium leguminosarum bv. viciae).